The sequence spans 877 residues: Leucine--tRNA ligase (877 aa).

Positions 43 to 53 match the 'HIGH' region motif; it reads PYPSGRIHMGH. Residues 628–632 carry the 'KMSKS' region motif; that stretch reads KMSKS. Lys631 is a binding site for ATP.

It belongs to the class-I aminoacyl-tRNA synthetase family.

Its subcellular location is the cytoplasm. The enzyme catalyses tRNA(Leu) + L-leucine + ATP = L-leucyl-tRNA(Leu) + AMP + diphosphate. The polypeptide is Leucine--tRNA ligase (Brucella abortus (strain S19)).